The chain runs to 121 residues: NADPH-dependent 7-cyano-7-deazaguanine reductase (121 aa).

The active-site Thioimide intermediate is the Cys-36. Catalysis depends on Asp-43, which acts as the Proton donor. Substrate is bound by residues 58–60 (VEL) and 77–78 (YE).

Belongs to the GTP cyclohydrolase I family. QueF type 1 subfamily.

The protein localises to the cytoplasm. The catalysed reaction is 7-aminomethyl-7-carbaguanine + 2 NADP(+) = 7-cyano-7-deazaguanine + 2 NADPH + 3 H(+). The protein operates within tRNA modification; tRNA-queuosine biosynthesis. Functionally, catalyzes the NADPH-dependent reduction of 7-cyano-7-deazaguanine (preQ0) to 7-aminomethyl-7-deazaguanine (preQ1). This is NADPH-dependent 7-cyano-7-deazaguanine reductase from Rhodopirellula baltica (strain DSM 10527 / NCIMB 13988 / SH1).